The chain runs to 327 residues: Cobalamin biosynthesis protein CobD (327 aa).

4 consecutive transmembrane segments (helical) span residues 63–83, 84–104, 158–178, and 305–325; these read VGILVLLAGATALGVVLARLF, DVLGALGSLLEVVTVAVFLAQ, FSDGVVAPAFWYAVAGLPGLL, and VFYAACSVMTFAFAAAALPLL.

The protein belongs to the CobD/CbiB family.

The protein localises to the cell membrane. It participates in cofactor biosynthesis; adenosylcobalamin biosynthesis. In terms of biological role, converts cobyric acid to cobinamide by the addition of aminopropanol on the F carboxylic group. This Rhizobium meliloti (strain 1021) (Ensifer meliloti) protein is Cobalamin biosynthesis protein CobD.